We begin with the raw amino-acid sequence, 187 residues long: NADH-quinone oxidoreductase subunit C 2 (187 aa).

The segment at 153-187 (YKDKLNPFGAEGPPPTQPDLATRDIPQGRPSTPES) is disordered.

Belongs to the complex I 30 kDa subunit family. As to quaternary structure, NDH-1 is composed of 14 different subunits. Subunits NuoB, C, D, E, F, and G constitute the peripheral sector of the complex.

The protein resides in the cell inner membrane. The enzyme catalyses a quinone + NADH + 5 H(+)(in) = a quinol + NAD(+) + 4 H(+)(out). NDH-1 shuttles electrons from NADH, via FMN and iron-sulfur (Fe-S) centers, to quinones in the respiratory chain. The immediate electron acceptor for the enzyme in this species is believed to be ubiquinone. Couples the redox reaction to proton translocation (for every two electrons transferred, four hydrogen ions are translocated across the cytoplasmic membrane), and thus conserves the redox energy in a proton gradient. The polypeptide is NADH-quinone oxidoreductase subunit C 2 (Rhizobium etli (strain CIAT 652)).